Consider the following 264-residue polypeptide: Small ribosomal subunit protein uS2 (264 aa).

It belongs to the universal ribosomal protein uS2 family.

In Helicobacter pylori (strain ATCC 700392 / 26695) (Campylobacter pylori), this protein is Small ribosomal subunit protein uS2 (rpsB).